The chain runs to 284 residues: Bifunctional protein FolD (284 aa).

NADP(+) is bound by residues 166-168 and S191; that span reads GRS.

The protein belongs to the tetrahydrofolate dehydrogenase/cyclohydrolase family. Homodimer.

The enzyme catalyses (6R)-5,10-methylene-5,6,7,8-tetrahydrofolate + NADP(+) = (6R)-5,10-methenyltetrahydrofolate + NADPH. It carries out the reaction (6R)-5,10-methenyltetrahydrofolate + H2O = (6R)-10-formyltetrahydrofolate + H(+). It participates in one-carbon metabolism; tetrahydrofolate interconversion. Its function is as follows. Catalyzes the oxidation of 5,10-methylenetetrahydrofolate to 5,10-methenyltetrahydrofolate and then the hydrolysis of 5,10-methenyltetrahydrofolate to 10-formyltetrahydrofolate. The sequence is that of Bifunctional protein FolD from Leptospira borgpetersenii serovar Hardjo-bovis (strain JB197).